The chain runs to 735 residues: Protein RETICULATA-RELATED 5, chloroplastic (735 aa).

A chloroplast-targeting transit peptide spans 1–75; the sequence is MKPTTNGGLL…TRRAILVAPP (75 aa). The next 2 helical transmembrane spans lie at 519–539 and 582–602; these read ASVV…FISY and VIIG…AAVG. Residues 714–726 are compositionally biased toward polar residues; sequence ASQSTVEYSTTEE. Positions 714–735 are disordered; the sequence is ASQSTVEYSTTEEASMDDLKNQ.

This sequence belongs to the RETICULATA family.

Its subcellular location is the plastid. It localises to the chloroplast membrane. Its function is as follows. May play a role in leaf development. This is Protein RETICULATA-RELATED 5, chloroplastic from Arabidopsis thaliana (Mouse-ear cress).